The primary structure comprises 614 residues: Laccase 1 (614 aa).

The signal sequence occupies residues 1–21 (MSRFARLLLMVVALFFTNAWA). Plastocyanin-like domains follow at residues 30–143 (ITWK…IRPK) and 172–360 (YLVV…MRIP). N75 carries an N-linked (GlcNAc...) asparagine glycan. Cu cation-binding residues include H79, H81, H123, and H125. N257, N280, N445, N469, and N485 each carry an N-linked (GlcNAc...) asparagine glycan. The Plastocyanin-like 3 domain maps to 469–599 (NATRDTENDG…GGMGIAILDG (131 aa)). Cu cation-binding residues include H507, H510, and H512. N527 is a glycosylation site (N-linked (GlcNAc...) asparagine). Residues H581, C582, H583, and H587 each contribute to the Cu cation site.

The protein belongs to the multicopper oxidase family. Cu cation is required as a cofactor.

Its subcellular location is the cell surface. The protein operates within pigment biosynthesis. In terms of biological role, laccase; part of the Pks1 gene cluster that mediates the biosynthesis of an anthraquinone derivative pigment that contributes to conidial pigmentation that provides protection from UV radiation, heat and cold stress. The polyketide synthase Pks1 produces 1-acetyl-2,4,6,8-tetrahydroxy-9,10-anthraquinone though condensation of acetyl-CoA with malonyl-CoA. The dehydratase EthD and the laccase Mlac1 further convert the anthraquinone derivative into the final conidial pigment. The chain is Laccase 1 from Metarhizium majus (strain ARSEF 297).